A 158-amino-acid polypeptide reads, in one-letter code: Class 10 plant pathogenesis-related protein 2A (158 aa).

Asp8 contacts trans-zeatin. 3 residues coordinate Ca(2+): Pro32, Val35, and Ile38. Glu60, His69, Tyr81, and Tyr83 together coordinate trans-zeatin.

The protein belongs to the BetVI family.

It localises to the cytoplasm. Its subcellular location is the cytosol. In terms of biological role, class II ribonuclease (RNase). Binds to cytokinins. Interacts with melatonin. The chain is Class 10 plant pathogenesis-related protein 2A from Lupinus luteus (European yellow lupine).